Consider the following 396-residue polypeptide: Purple acid phosphatase 5 (396 aa).

The signal sequence occupies residues 1–13 (MSLETFPPPAGYN). Asn-58 carries an N-linked (GlcNAc...) asparagine glycan. Fe cation is bound at residue Asp-125. Residue Asn-133 is glycosylated (N-linked (GlcNAc...) asparagine). Fe cation contacts are provided by Asp-153 and Tyr-156. Asp-153 lines the Zn(2+) pocket. Asn-190 provides a ligand contact to Zn(2+). Asn-190 is a substrate binding site. Residue Asn-238 is glycosylated (N-linked (GlcNAc...) asparagine). His-250 is a Zn(2+) binding site. His-260 acts as the Proton donor in catalysis. Residue His-287 coordinates Zn(2+). 287-289 (HVH) is a substrate binding site. His-289 is a binding site for Fe cation. Asn-303 and Asn-360 each carry an N-linked (GlcNAc...) asparagine glycan.

Belongs to the metallophosphoesterase superfamily. Purple acid phosphatase family. In terms of assembly, homodimer. Fe cation serves as cofactor. It depends on Zn(2+) as a cofactor.

The protein resides in the secreted. It carries out the reaction a phosphate monoester + H2O = an alcohol + phosphate. The polypeptide is Purple acid phosphatase 5 (PAP5) (Arabidopsis thaliana (Mouse-ear cress)).